The chain runs to 175 residues: Phosphatidylglycerol/phosphatidylinositol transfer protein (175 aa).

A signal peptide spans 1-21 (MKFLSTAAALLVCLAPVSTTA). Positions 22–37 (RSLDFFKSSQSPIQAQ) are excised as a propeptide.

The protein belongs to the NPC2 family. Monomer.

It is found in the cytoplasm. It localises to the cytoplasmic vesicle. The protein resides in the golgi apparatus. In terms of biological role, catalyzes the intermembrane transfer of phosphatidylglycerol and phosphatidylinositol. The polypeptide is Phosphatidylglycerol/phosphatidylinositol transfer protein (pltp) (Aspergillus oryzae (strain ATCC 42149 / RIB 40) (Yellow koji mold)).